The chain runs to 284 residues: Formamidopyrimidine-DNA glycosylase (284 aa).

The Schiff-base intermediate with DNA role is filled by Pro-2. Catalysis depends on Glu-3, which acts as the Proton donor. Residue Lys-60 is the Proton donor; for beta-elimination activity of the active site. The DNA site is built by His-99, Arg-118, and Arg-163. The segment at 248–282 (WVYGRQGQPCRTCGQTIERIKLVGRSTHFCPQCQP) adopts an FPG-type zinc-finger fold. Arg-272 functions as the Proton donor; for delta-elimination activity in the catalytic mechanism.

This sequence belongs to the FPG family. Monomer. Zn(2+) is required as a cofactor.

It catalyses the reaction Hydrolysis of DNA containing ring-opened 7-methylguanine residues, releasing 2,6-diamino-4-hydroxy-5-(N-methyl)formamidopyrimidine.. The enzyme catalyses 2'-deoxyribonucleotide-(2'-deoxyribose 5'-phosphate)-2'-deoxyribonucleotide-DNA = a 3'-end 2'-deoxyribonucleotide-(2,3-dehydro-2,3-deoxyribose 5'-phosphate)-DNA + a 5'-end 5'-phospho-2'-deoxyribonucleoside-DNA + H(+). Involved in base excision repair of DNA damaged by oxidation or by mutagenic agents. Acts as a DNA glycosylase that recognizes and removes damaged bases. Has a preference for oxidized purines, such as 7,8-dihydro-8-oxoguanine (8-oxoG). Has AP (apurinic/apyrimidinic) lyase activity and introduces nicks in the DNA strand. Cleaves the DNA backbone by beta-delta elimination to generate a single-strand break at the site of the removed base with both 3'- and 5'-phosphates. This Acaryochloris marina (strain MBIC 11017) protein is Formamidopyrimidine-DNA glycosylase.